Consider the following 490-residue polypeptide: Ribosome biogenesis protein YTM1 (490 aa).

The interval 1–22 is disordered; sequence MDGLEDGPLDASTATSQKPQRQ. A ubiquitin-like (UBL) domain region spans residues 23 to 104; that stretch reads VRLKLTSRHE…ETTLDVEYVR (82 aa). 7 WD repeats span residues 116–168, 175–213, 224–263, 298–338, 340–379, 385–425, and 449–487; these read LHDD…IALS, GHTASVKCARMVSPSQIISSGLDRTVRLWKYTESEDGFS, GHKGSVDSISMHAQSHRILSASADHSVGFWSTRKSENPAA, SHTA…LVDT, TASHSLLSVSHMPELSLLASGTSARHITLIDPRASATTVS, GHTN…TDKD, and GEGVKVFDVCWDKSVGIVSSGEDKMIQINRGEGVLPNGG. Residues 255–286 are disordered; that stretch reads TRKSENPAAPESLLPSNTSRSSKRRKLNSSVS.

It belongs to the WD repeat WDR12/YTM1 family. As to quaternary structure, component of the NOP7 complex, composed of ERB1, NOP7 and YTM1. The complex is held together by ERB1, which interacts with NOP7 via its N-terminal domain and with YTM1 via a high-affinity interaction between the seven-bladed beta-propeller domains of the 2 proteins. The NOP7 complex associates with the 66S pre-ribosome. Interacts (via UBL domain) with MDN1 (via VWFA/MIDAS domain).

Its subcellular location is the nucleus. It localises to the nucleolus. The protein resides in the nucleoplasm. In terms of biological role, component of the NOP7 complex, which is required for maturation of the 25S and 5.8S ribosomal RNAs and formation of the 60S ribosome. In Ajellomyces capsulatus (strain NAm1 / WU24) (Darling's disease fungus), this protein is Ribosome biogenesis protein YTM1.